We begin with the raw amino-acid sequence, 82 residues long: MAVFHDEVEIEDFQYDEDSETYFYPCPCGDNFAITKEDLENGEDVATCPSCSLIIKVIYDKDQFMCGETVPAPSTNKELVKC.

The region spanning 4–60 is the DPH-type MB domain; the sequence is FHDEVEIEDFQYDEDSETYFYPCPCGDNFAITKEDLENGEDVATCPSCSLIIKVIYD. The Fe cation site is built by Cys26, Cys28, Cys48, and Cys51.

This sequence belongs to the DPH3 family. Component of the 2-(3-amino-3-carboxypropyl)histidine synthase complex composed of DPH1, DPH2, DPH3 and a NADH-dependent reductase. Interacts with SERGEF. The cofactor is Fe(2+). Widely expressed with highest levels in heart, liver, kidney and testis.

It localises to the cytoplasm. Its subcellular location is the nucleus. The catalysed reaction is [3Fe-4S](1+)-[protein] + Fe(2+)-[Dph3] = [3Fe-4S](0)-[protein] + Fe(3+)-[Dph3]. The enzyme catalyses 2 [3Fe-4S](0)-[protein] + 2 Fe(2+)-[Dph3] + NADH = 2 [4Fe-4S](1+)-[protein] + 2 [Dph3] + NAD(+) + H(+). It participates in protein modification; peptidyl-diphthamide biosynthesis. Functionally, required for the first step of diphthamide biosynthesis, a post-translational modification of histidine which occurs in elongation factor 2. DPH1 and DPH2 transfer a 3-amino-3-carboxypropyl (ACP) group from S-adenosyl-L-methionine (SAM) to a histidine residue, the reaction is assisted by a reduction system comprising DPH3 and a NADH-dependent reductase. Acts as an electron donor to reduce the Fe-S cluster in DPH1-DPH2 keeping the [4Fe-4S] clusters in the active and reduced state. Restores iron to DPH1-DPH2 iron-sulfur clusters which have degraded from [4Fe-4S] to [3Fe-4S] by donating an iron atom to reform [4Fe-4S] clusters, in a manner dependent on the presence of elongation factor 2 and SAM. Associates with the elongator complex and is required for tRNA Wobble base modifications mediated by the elongator complex. The elongator complex is required for multiple tRNA modifications, including mcm5U (5-methoxycarbonylmethyl uridine), mcm5s 2U (5-methoxycarbonylmethyl-2-thiouridine), and ncm5U (5-carbamoylmethyl uridine). The sequence is that of Diphthamide biosynthesis protein 3 from Mus musculus (Mouse).